The sequence spans 444 residues: Prenyltransferase phnF (444 aa).

The protein belongs to the tryptophan dimethylallyltransferase family.

It carries out the reaction 2,3,4,7,9-pentahydroxy-6-methyl-1H-phenalen-1-one + dimethylallyl diphosphate = 2,4,7,9-tetrahydroxy-6-methyl-8-(2-methylbut-3-en-2-yl)-1-oxo-1H-phenalen-3-ol + diphosphate. It functions in the pathway secondary metabolite biosynthesis. Functionally, prenyltransferase; part of the gene cluster that mediates the biosynthesis of phenalenones such as herqueinone, compounds that have been reported to treat tumors, bacterial infections and/or mycoses, and rheumatic diseases. The non-reducing polyketide synthase phnA synthesizes the heptaketide backbone and cyclizes it into the angular, hemiketal-containing naphtho-gamma-pyrone prephenalenone. The product template (PT) domain of phnA catalyzes only the C4-C9 aldol condensation, which is unprecedented among known PT domains. The transformation of prephenalenone to phenalenones requires an FAD-dependent monooxygenase phnB, which catalyzes the C2 aromatic hydroxylation of prephenalenone and ring opening of the gamma-pyrone ring simultaneously. Subsequent intramolecular deprotonation of C3 phenolic oxygen accelerates phenalenone ring closure to yield the tricyclic phenalenone core with a C2 hydroxylation. The prenyltransferase phnF further catalyzes reverse C-prenylation of phenalenone by direct electrophilic substitution at C6, or possibly via first a forward O-prenylation of a neighboring phenol in phenalenone, followed by a Claisen rearrangement. The hydroalkoxylation enzyme phnH catalyzes the 5-exo-trig cyclization via acid catalysis after the spontaneous deprotonation of 7-OH, which leads to the formation of the dihydrobenzofuran atrovenetin. Atrovenetin is further converted to deoxyherqueinone by the O-methyltransferase phnC which can methylate C2-OH to stabilize the northern portion of the phenalenone core. Finally, the oxidoreductase phnG converts deoxyherqueinone to herqueinone via C6 hydroxylation. The polypeptide is Prenyltransferase phnF (Penicillium herquei).